Here is an 850-residue protein sequence, read N- to C-terminus: Rho guanine nucleotide exchange factor 33 (850 aa).

Basic and acidic residues-rich tracts occupy residues 1–13 (MEKSKAKQGENEH) and 98–113 (EEMQQKIEQLQQEKRR). Disordered stretches follow at residues 1 to 21 (MEKSKAKQGENEHMPVNNPST) and 98 to 209 (EEMQ…DENL). The stretch at 54–128 (LEEKVKSCRC…KAKKAQKEEH (75 aa)) forms a coiled coil. A compositionally biased stretch (low complexity) spans 130-149 (AQAGPASAPAPGSAPTQGSP). Polar residues predominate over residues 164–175 (DFTNMLPSQNYE). In terms of domain architecture, DH spans 273–448 (KRQTVALELL…RVFISHYTLL (176 aa)). Disordered regions lie at residues 504 to 550 (EMLQ…WELE) and 702 to 850 (AAQA…WGWW). 2 stretches are compositionally biased toward low complexity: residues 510–520 (PSSSSSAPAVS) and 754–770 (APHGPAAAAAASRGAPR). Arg766 bears the Omega-N-methylarginine mark. A compositionally biased stretch (polar residues) spans 773–783 (FPQQRSQSEKQ). The span at 784–806 (TYLEEMHLEDATRFCPKEERESE) shows a compositional bias: basic and acidic residues. Basic residues predominate over residues 826–835 (SFRKLFKKKN).

In Mus musculus (Mouse), this protein is Rho guanine nucleotide exchange factor 33 (Arhgef33).